Reading from the N-terminus, the 515-residue chain is Bifunctional purine biosynthesis protein PurH (515 aa).

The region spanning 1–145 (MTKRALISVS…KNHASVTVVV (145 aa)) is the MGS-like domain.

This sequence belongs to the PurH family.

The catalysed reaction is (6R)-10-formyltetrahydrofolate + 5-amino-1-(5-phospho-beta-D-ribosyl)imidazole-4-carboxamide = 5-formamido-1-(5-phospho-D-ribosyl)imidazole-4-carboxamide + (6S)-5,6,7,8-tetrahydrofolate. It carries out the reaction IMP + H2O = 5-formamido-1-(5-phospho-D-ribosyl)imidazole-4-carboxamide. It participates in purine metabolism; IMP biosynthesis via de novo pathway; 5-formamido-1-(5-phospho-D-ribosyl)imidazole-4-carboxamide from 5-amino-1-(5-phospho-D-ribosyl)imidazole-4-carboxamide (10-formyl THF route): step 1/1. It functions in the pathway purine metabolism; IMP biosynthesis via de novo pathway; IMP from 5-formamido-1-(5-phospho-D-ribosyl)imidazole-4-carboxamide: step 1/1. This is Bifunctional purine biosynthesis protein PurH from Streptococcus pyogenes serotype M12 (strain MGAS2096).